Consider the following 467-residue polypeptide: Flagellum-specific ATP synthase (467 aa).

180-187 (AGSGVGKS) lines the ATP pocket.

It belongs to the ATPase alpha/beta chains family.

It localises to the cytoplasm. The catalysed reaction is ATP + H2O + 4 H(+)(in) = ADP + phosphate + 5 H(+)(out). In terms of biological role, probable catalytic subunit of a protein translocase for flagellum-specific export, or a proton translocase involved in local circuits at the flagellum. The chain is Flagellum-specific ATP synthase (fliI) from Rhizobium meliloti (strain 1021) (Ensifer meliloti).